We begin with the raw amino-acid sequence, 416 residues long: Squalene synthase (416 aa).

The next 2 membrane-spanning stretches (helical) occupy residues Val285–Tyr304 and Phe386–Ala406.

This sequence belongs to the phytoene/squalene synthase family. Requires Mg(2+) as cofactor.

The protein localises to the endoplasmic reticulum membrane. It catalyses the reaction 2 (2E,6E)-farnesyl diphosphate + NADPH + H(+) = squalene + 2 diphosphate + NADP(+). The enzyme catalyses 2 (2E,6E)-farnesyl diphosphate + NADH + H(+) = squalene + 2 diphosphate + NAD(+). The protein operates within terpene metabolism; lanosterol biosynthesis; lanosterol from farnesyl diphosphate: step 1/3. This chain is Squalene synthase (fdfT), found in Dictyostelium discoideum (Social amoeba).